Reading from the N-terminus, the 383-residue chain is PqqA peptide cyclase (383 aa).

The 216-residue stretch at 11-226 (PGPPLWLLAE…TNQWREKLAA (216 aa)) folds into the Radical SAM core domain. Positions 25, 29, and 32 each coordinate [4Fe-4S] cluster.

It belongs to the radical SAM superfamily. PqqE family. As to quaternary structure, interacts with PqqD. The interaction is necessary for activity of PqqE. [4Fe-4S] cluster is required as a cofactor.

It carries out the reaction [PQQ precursor protein] + S-adenosyl-L-methionine = E-Y cross-linked-[PQQ precursor protein] + 5'-deoxyadenosine + L-methionine + H(+). The protein operates within cofactor biosynthesis; pyrroloquinoline quinone biosynthesis. Functionally, catalyzes the cross-linking of a glutamate residue and a tyrosine residue in the PqqA protein as part of the biosynthesis of pyrroloquinoline quinone (PQQ). The protein is PqqA peptide cyclase of Azotobacter vinelandii (strain DJ / ATCC BAA-1303).